We begin with the raw amino-acid sequence, 110 residues long: Nucleoid-associated protein PsycPRwf_1729 (110 aa).

The protein belongs to the YbaB/EbfC family. Homodimer.

It is found in the cytoplasm. It localises to the nucleoid. Functionally, binds to DNA and alters its conformation. May be involved in regulation of gene expression, nucleoid organization and DNA protection. In Psychrobacter sp. (strain PRwf-1), this protein is Nucleoid-associated protein PsycPRwf_1729.